Consider the following 190-residue polypeptide: Probable nicotinate-nucleotide adenylyltransferase (190 aa).

This sequence belongs to the NadD family.

The catalysed reaction is nicotinate beta-D-ribonucleotide + ATP + H(+) = deamido-NAD(+) + diphosphate. The protein operates within cofactor biosynthesis; NAD(+) biosynthesis; deamido-NAD(+) from nicotinate D-ribonucleotide: step 1/1. Its function is as follows. Catalyzes the reversible adenylation of nicotinate mononucleotide (NaMN) to nicotinic acid adenine dinucleotide (NaAD). The polypeptide is Probable nicotinate-nucleotide adenylyltransferase (Frankia alni (strain DSM 45986 / CECT 9034 / ACN14a)).